The chain runs to 130 residues: ATP synthase epsilon chain (130 aa).

It belongs to the ATPase epsilon chain family. In terms of assembly, F-type ATPases have 2 components, CF(1) - the catalytic core - and CF(0) - the membrane proton channel. CF(1) has five subunits: alpha(3), beta(3), gamma(1), delta(1), epsilon(1). CF(0) has three main subunits: a, b and c.

Its subcellular location is the cell inner membrane. Its function is as follows. Produces ATP from ADP in the presence of a proton gradient across the membrane. This chain is ATP synthase epsilon chain, found in Pelagibacter ubique (strain HTCC1062).